The chain runs to 1487 residues: Probable lysine-specific demethylase SE14 (1487 aa).

Residues 1–23 form a disordered region; that stretch reads MPPQPPPAASASASAPDPAVPAW. Residues 9-22 show a composition bias toward low complexity; it reads ASASASAPDPAVPA. A JmjN domain is found at 30–71; it reads APEYRPTESEFADPIAFLSRVEREAAAYGICKVIPPHPRPSR. The span at 86–104 shows a compositional bias: low complexity; the sequence is CDAPAPSPAAASDSSIPPS. Residues 86-113 form a disordered region; that stretch reads CDAPAPSPAAASDSSIPPSSSSPPPVSA. The JmjC domain occupies 232–398; the sequence is NSPWNLQAIA…FAKEAAVRRA (167 aa). H275, E277, and H366 together coordinate Fe cation. 2 disordered regions span residues 494-555 and 684-718; these read SCSK…DDGD and YGDTETPEKKIPSDCPGSELSKQSGRGDVNVPDVE. 2 stretches are compositionally biased toward basic and acidic residues: residues 498 to 507 and 542 to 551; these read APEKKGEDGP and QAPEGEKLDT. A C2H2-type 1; degenerate zinc finger spans residues 1377–1400; that stretch reads FQCDIEFCDMTFETKAELRAHQRN. 3 consecutive C2H2-type zinc fingers follow at residues 1400-1424, 1430-1454, and 1460-1486; these read NICTDESCGKRFSSHKYLKRHQCVH, FKCPWDGCPMTFKWLWAQTEHIRVH, and YKCSAPDCGQSFRYVSDYSRHRKKFNH.

The cofactor is Fe(2+).

The protein localises to the nucleus. In terms of biological role, histone demethylase that demethylates 'Lys-4' (H3K4me) of histone H3. Involved in the control of flowering time. Has a suppressive effect on floral transition under long day conditions through the demethylation of H3K4me3 in the promoter region of the flower-promoting signal HD3B/RFT1. In Oryza sativa subsp. japonica (Rice), this protein is Probable lysine-specific demethylase SE14 (SE14).